The chain runs to 72 residues: uncharacterized protein (72 aa).

This is an uncharacterized protein from Vertebrata (FPV).